Reading from the N-terminus, the 1638-residue chain is ATP-dependent helicase brm (1638 aa).

2 disordered regions span residues 1–137 (MASP…SQEN) and 201–387 (QMQQ…GMPM). The segment covering 7-51 (ANSPMPPPQAPSPMAPPSQSPAPSPHSPYPHQQPGPLQGPPPPGH) has biased composition (pro residues). Residues 52–63 (PGAYGHPMQHGP) are compositionally biased toward low complexity. A compositionally biased stretch (pro residues) spans 121-131 (GGPPGGPPPPE). Positions 173-208 (HLNGNQVNLLRTQITAYRLLARNKPISMQMQQALQA) constitute a QLQ domain. The segment covering 201–211 (QMQQALQAAQQ) has biased composition (low complexity). Pro residues-rich tracts occupy residues 212–231 (QPPP…PPPG), 238–253 (PPVP…PSAG), 263–272 (ASNPYGPPVP), and 279–304 (APPP…PPPI). 2 stretches are compositionally biased toward low complexity: residues 305–317 (QQQQ…QQQS) and 365–382 (PGSQ…QVPP). The 73-residue stretch at 501 to 573 (QKLEAERKRR…EKERMRRLMA (73 aa)) folds into the HSA domain. Residues 691-730 (DEEDSCGSNDDHKPKVEEQPTATEDATDKAQATGNDEDAK) are disordered. A phosphoserine mark is found at Ser-695 and Ser-698. Residues 699-708 (NDDHKPKVEE) are compositionally biased toward basic and acidic residues. A compositionally biased stretch (polar residues) spans 710–724 (PTATEDATDKAQATG). A Helicase ATP-binding domain is found at 785 to 950 (VSLYNNNLNG…WALLNFLLPS (166 aa)). 798-805 (DEMGLGKT) provides a ligand contact to ATP. Positions 900–903 (DEGH) match the DEGH box motif. One can recognise a Helicase C-terminal domain in the interval 1102-1263 (LLDRILPKLK…QKSTGSERQQ (162 aa)). The span at 1380 to 1391 (DGAEFDEEEEED) shows a compositional bias: acidic residues. The segment at 1380–1412 (DGAEFDEEEEEDDSKRKRRKRKNRKEESDDDSL) is disordered. 2 positions are modified to phosphoserine: Ser-1407 and Ser-1411. One can recognise a Bromo domain in the interval 1425–1530 (RSKKQMHKIM…KVFVGARQRI (106 aa)). Residues 1544–1578 (NTGEAHGNGGSDNSDNDDDDGGDDGSDDEEIATTS) are disordered. The segment covering 1557–1574 (SDNDDDDGGDDGSDDEEI) has biased composition (acidic residues). Phosphoserine occurs at positions 1591 and 1594. A compositionally biased stretch (low complexity) spans 1592–1604 (LASAPATPTQSSS). Residues 1592-1638 (LASAPATPTQSSSNVSSGAATTSKKQTRRKRSQKKYTISDDDDDDMD) form a disordered region. Residues 1616–1625 (KQTRRKRSQK) are compositionally biased toward basic residues.

In terms of assembly, component of the Brahma complex, which is composed of brm, osa, mor, Snr1/Bap45, dalao/Bap111, Bap55, Bap60 and Act42A/Bap47. Interacts with asf1. Associates with the brm-HDAC3-erm repressor complex, composed of brm, HDAC3 and erm. Interacts with erm and HDAC3.

The protein localises to the nucleus. The catalysed reaction is ATP + H2O = ADP + phosphate + H(+). In terms of biological role, transcriptional regulator. Acts as a coactivator, assisting one or more dedicated transcriptional activators of ANTC and BXC homeotic gene clusters. Can counteract the repressive effect of Polycomb protein. ATPase subunit of the Brahma complex, a multiprotein complex which is the equivalent of the yeast SWI/SNF complex and acts by remodeling the chromatin by catalyzing an ATP-dependent alteration in the structure of nucleosomal DNA. This complex can both serve as a transcriptional coactivator or corepressor, depending on the context. In type II neuroblast lineage, as part of the Brm remodeling complex, suppresses the formation of ectopic neuroblasts probably through interaction with erm and HDAC3. This chain is ATP-dependent helicase brm (brm), found in Drosophila melanogaster (Fruit fly).